A 1058-amino-acid polypeptide reads, in one-letter code: Carbamoyl phosphate synthase large chain (1058 aa).

The tract at residues 1 to 401 (MPKRTDIQKI…SLLKACRSLE (401 aa)) is carboxyphosphate synthetic domain. Positions 129, 169, 175, 176, 208, 210, 215, 241, 242, 243, 284, and 298 each coordinate ATP. The region spanning 133 to 327 (KQLMEELEQP…IAKLAAKIAV (195 aa)) is the ATP-grasp 1 domain. 3 residues coordinate Mg(2+): Q284, E298, and N300. 3 residues coordinate Mn(2+): Q284, E298, and N300. The tract at residues 402–546 (IGVHHNEIPE…YSTYGWENES (145 aa)) is oligomerization domain. The segment at 547-929 (IRSDKESVLV…ALYKAFEASY (383 aa)) is carbamoyl phosphate synthetic domain. In terms of domain architecture, ATP-grasp 2 spans 671–861 (EQALKELDIP…MAQVATKLIL (191 aa)). R707, S746, I748, E752, G777, V778, H779, S780, Q820, and E832 together coordinate ATP. The Mg(2+) site is built by Q820, E832, and N834. Q820, E832, and N834 together coordinate Mn(2+). In terms of domain architecture, MGS-like spans 930 to 1058 (LHLPTFGNVV…ESRSFVTEAI (129 aa)). Residues 930–1058 (LHLPTFGNVV…ESRSFVTEAI (129 aa)) are allosteric domain.

The protein belongs to the CarB family. As to quaternary structure, composed of two chains; the small (or glutamine) chain promotes the hydrolysis of glutamine to ammonia, which is used by the large (or ammonia) chain to synthesize carbamoyl phosphate. Tetramer of heterodimers (alpha,beta)4. Mg(2+) serves as cofactor. Mn(2+) is required as a cofactor.

The catalysed reaction is hydrogencarbonate + L-glutamine + 2 ATP + H2O = carbamoyl phosphate + L-glutamate + 2 ADP + phosphate + 2 H(+). It carries out the reaction hydrogencarbonate + NH4(+) + 2 ATP = carbamoyl phosphate + 2 ADP + phosphate + 2 H(+). It participates in amino-acid biosynthesis; L-arginine biosynthesis; carbamoyl phosphate from bicarbonate: step 1/1. It functions in the pathway pyrimidine metabolism; UMP biosynthesis via de novo pathway; (S)-dihydroorotate from bicarbonate: step 1/3. In terms of biological role, large subunit of the glutamine-dependent carbamoyl phosphate synthetase (CPSase). CPSase catalyzes the formation of carbamoyl phosphate from the ammonia moiety of glutamine, carbonate, and phosphate donated by ATP, constituting the first step of 2 biosynthetic pathways, one leading to arginine and/or urea and the other to pyrimidine nucleotides. The large subunit (synthetase) binds the substrates ammonia (free or transferred from glutamine from the small subunit), hydrogencarbonate and ATP and carries out an ATP-coupled ligase reaction, activating hydrogencarbonate by forming carboxy phosphate which reacts with ammonia to form carbamoyl phosphate. In Streptococcus pneumoniae (strain Hungary19A-6), this protein is Carbamoyl phosphate synthase large chain.